We begin with the raw amino-acid sequence, 320 residues long: Solute carrier family 25 member 33 (320 aa).

Solcar repeat units lie at residues 9 to 118 (ENTL…AKEQ), 126 to 213 (NSNT…LKKC), and 231 to 315 (SGFF…IVYL). 6 helical membrane passes run 12-32 (LLHLFAGGCGGTVGAIFTCPL), 49-65 (VYYPQVHLGTISGAGMV), 121-141 (GIFVPNSNTVHILSAGSAAFV), 190-210 (LTASYAGISETIICFAIYESL), 233-253 (FFGLMAAAAVSKGCASCIAYP), and 298-318 (QIPNTAIVLSTYEFIVYLLGE).

It belongs to the mitochondrial carrier (TC 2.A.29) family.

It localises to the mitochondrion inner membrane. It carries out the reaction UTP(in) + UDP(out) = UTP(out) + UDP(in). The catalysed reaction is dUTP(out) + UTP(in) = dUTP(in) + UTP(out). The enzyme catalyses 5-methyl-UTP(out) + UTP(in) = 5-methyl-UTP(in) + UTP(out). It catalyses the reaction 5-methyl-UDP(out) + UTP(in) = 5-methyl-UDP(in) + UTP(out). It carries out the reaction UTP(in) + CTP(out) = UTP(out) + CTP(in). The catalysed reaction is CDP(out) + UTP(in) = CDP(in) + UTP(out). The enzyme catalyses dCTP(out) + UTP(in) = dCTP(in) + UTP(out). It catalyses the reaction dCDP(out) + UTP(in) = dCDP(in) + UTP(out). It carries out the reaction UTP(in) + GTP(out) = UTP(out) + GTP(in). The catalysed reaction is UTP(in) + GDP(out) = UTP(out) + GDP(in). The enzyme catalyses dGTP(out) + UTP(in) = dGTP(in) + UTP(out). It catalyses the reaction dGDP(out) + UTP(in) = dGDP(in) + UTP(out). It carries out the reaction ITP(out) + UTP(in) = ITP(in) + UTP(out). Functionally, mitochondrial transporter that imports/exports pyrimidine nucleotides into and from mitochondria. Selectively transports uridine, thymidine, guanosine, cytosine and inosine (deoxy)nucleoside di- and triphosphates by an antiport mechanism. May import (deoxy)nucleoside triphosphates in exchange for intramitochondrial (deoxy)nucleoside diphosphates, thus providing precursors necessary for de novo synthesis of mitochondrial DNA and RNA while exporting products of their catabolism. Participates in mitochondrial genome maintenance, regulation of mitochondrial membrane potential and mitochondrial respiration. Upon INS or IGF1 stimulation regulates cell growth and proliferation by controlling mitochondrial DNA replication and transcription, the ratio of mitochondria-to nuclear-encoded components of the electron transport chain resulting in control of mitochondrial ROS production. Participates in dendritic cell endocytosis and may associate with mitochondrial oxidative phosphorylation. This is Solute carrier family 25 member 33 (Slc25a33) from Mus musculus (Mouse).